The sequence spans 226 residues: N-acetyltransferase family 8 member 2 (226 aa).

2 consecutive transmembrane segments (helical) span residues 33-55 (FYHV…TIIL) and 60-82 (WLLA…WVSC). In terms of domain architecture, N-acetyltransferase spans 69-221 (LFLLCLRLIF…FHFTYSLPSV (153 aa)). K204 carries the post-translational modification N6-acetyllysine.

The protein belongs to the camello family.

Its subcellular location is the membrane. Functionally, probable acetyltransferase. Has no detectable histone acetyltransferase activity towards histone H3 or H4. The polypeptide is N-acetyltransferase family 8 member 2 (Rattus norvegicus (Rat)).